The sequence spans 119 residues: Large ribosomal subunit protein bL20 (119 aa).

This sequence belongs to the bacterial ribosomal protein bL20 family.

Its function is as follows. Binds directly to 23S ribosomal RNA and is necessary for the in vitro assembly process of the 50S ribosomal subunit. It is not involved in the protein synthesizing functions of that subunit. The sequence is that of Large ribosomal subunit protein bL20 from Acidithiobacillus ferrooxidans (strain ATCC 23270 / DSM 14882 / CIP 104768 / NCIMB 8455) (Ferrobacillus ferrooxidans (strain ATCC 23270)).